A 518-amino-acid chain; its full sequence is MESFLPLVDENLRSALWFRPEMALTFGTLVLFVLDLVFRRSQARVALLTAGALAVLAAAAGLLAIQPPDAQALFNGMLANDAFAIFFKWLFLAAGALTVIIAAQGRDFPPERIGQFFALLMAIVLGMFMMASATDLLMVYLSLELVSMVSYVLAGFRKGDRKATEGSLKYVIYGGVASGVMLFGMSYLYGLTGTTSLHELGAQLQALQAGSAVSVAATRVALVVAIVFVTAGIGYKVAAVPWHMWCPDVYEGAPTPFTAFLSVGPKAAGFALAIRIFHSALAGPSSPVTGFAESLAGIPWPAVVGVIAAVTMTLGNLTALGQTNLKRLLAYSSIAHAGYTLMGLSAVSDRGMQSVMIYMLVYLVMNVGAFLVVILVAESTGSESILDYRGLSKRHPSAAVAFAIFLFSLTGLPPFAGFVGKWYLFYAVFERIDGPGGAWYAWLALIGALNTAIALYYYVRVIRAMFIDAPYVAEAPPVRLRVGYQVMLGAFSVAILVFGIWWTPMVRWTEASLQLFRG.

Transmembrane regions (helical) follow at residues Phe-18–Phe-38, Val-45–Ile-65, Ala-82–Ala-102, Ile-113–Ala-133, Leu-136–Phe-156, Val-171–Leu-191, Val-220–Val-240, Pro-254–Ile-274, Leu-295–Gly-315, Leu-328–Ser-348, Val-355–Leu-375, Ala-399–Val-419, Trp-439–Val-459, and Val-486–Val-506.

This sequence belongs to the complex I subunit 2 family. In terms of assembly, NDH-1 is composed of 14 different subunits. Subunits NuoA, H, J, K, L, M, N constitute the membrane sector of the complex.

The protein resides in the cell inner membrane. The catalysed reaction is a quinone + NADH + 5 H(+)(in) = a quinol + NAD(+) + 4 H(+)(out). In terms of biological role, NDH-1 shuttles electrons from NADH, via FMN and iron-sulfur (Fe-S) centers, to quinones in the respiratory chain. The immediate electron acceptor for the enzyme in this species is believed to be ubiquinone. Couples the redox reaction to proton translocation (for every two electrons transferred, four hydrogen ions are translocated across the cytoplasmic membrane), and thus conserves the redox energy in a proton gradient. The sequence is that of NADH-quinone oxidoreductase subunit N from Anaeromyxobacter sp. (strain Fw109-5).